Reading from the N-terminus, the 227-residue chain is Cysteine-rich hydrophobic domain-containing protein 1 (227 aa).

The interval 1 to 84 is disordered; sequence MSILLPNMAE…PPRVVSEEHL (84 aa). Residues 13 to 23 are compositionally biased toward acidic residues; the sequence is TISELEEEEEA. The segment covering 24 to 44 has biased composition (low complexity); it reads ATSSSSPSSSPSSSSSSSVSG. Positions 45-72 are enriched in acidic residues; sequence PDEDEEDEEEEEEEDEEEEDEEEEEEEV. Positions 46–73 form a coiled coil; it reads DEDEEDEEEEEEEDEEEEDEEEEEEEVP.

This sequence belongs to the CHIC family. Palmitoylated. As to expression, expressed moderately in the brain.

The protein localises to the cell membrane. The protein resides in the cytoplasmic vesicle. This Mus musculus (Mouse) protein is Cysteine-rich hydrophobic domain-containing protein 1 (Chic1).